A 255-amino-acid chain; its full sequence is Thrombin-like enzyme batroxobin (255 aa).

Positions 1–18 are cleaved as a signal peptide; that stretch reads MVLIRVIANLLILQVSYA. Positions 19–24 are excised as a propeptide; sequence QKSSEL. A Peptidase S1 domain is found at 25–247; the sequence is VIGGDECDIN…YLPWIQSIIA (223 aa). Disulfide bonds link Cys31–Cys163, Cys50–Cys66, Cys98–Cys254, Cys142–Cys208, Cys174–Cys187, and Cys198–Cys223. Residues His65 and Asp110 each act as charge relay system in the active site. Residue Asn170 is glycosylated (N-linked (GlcNAc...) asparagine). Catalysis depends on Ser202, which acts as the Charge relay system. N-linked (GlcNAc...) asparagine glycosylation occurs at Asn249.

Belongs to the peptidase S1 family. Snake venom subfamily. Monomer. Expressed by the venom gland.

It localises to the secreted. It carries out the reaction Selective cleavage of Arg-|-Xaa bond in fibrinogen, to form fibrin, and release fibrinopeptide A. The specificity of further degradation of fibrinogen varies with species origin of the enzyme.. In terms of biological role, thrombin-like snake venom serine protease. Cleaves Arg-Gly bonds in fibrinogen alpha chains (FGA). In Bothrops atrox (Barba amarilla), this protein is Thrombin-like enzyme batroxobin.